The sequence spans 677 residues: AP-2 complex subunit beta (677 aa).

A disordered region spans residues 597–677 (RLRTRDSNPS…PMTPETHLMD (81 aa)). Over residues 616-627 (KKYNHFHQKSQT) the composition is skewed to basic residues. The segment covering 636–654 (RNSWNPSPFSDESNSNTFS) has biased composition (polar residues).

Belongs to the adaptor complexes large subunit family. In terms of assembly, adaptor protein complex 2 (AP-2) is a heterotetramer composed of two large adaptins (alpha-type subunit apl3 and beta-type subunit apl1), a medium chain (mu-type subunit apm4) and a small adaptin (sigma-type subunit aps2).

The protein localises to the cell membrane. Its subcellular location is the membrane. The protein resides in the coated pit. Adaptins are components of the adaptor complexes which link clathrin to receptors in coated vesicles. Clathrin-associated protein complexes are believed to interact with the cytoplasmic tails of membrane proteins, leading to their selection and concentration. Beta adaptin is a subunit of the plasma membrane adaptor. The chain is AP-2 complex subunit beta (apl1) from Schizosaccharomyces pombe (strain 972 / ATCC 24843) (Fission yeast).